We begin with the raw amino-acid sequence, 312 residues long: Glyoxylate/hydroxypyruvate reductase A (312 aa).

The active site involves Arg-227. His-275 functions as the Proton donor in the catalytic mechanism.

Belongs to the D-isomer specific 2-hydroxyacid dehydrogenase family. GhrA subfamily.

Its subcellular location is the cytoplasm. It carries out the reaction glycolate + NADP(+) = glyoxylate + NADPH + H(+). The catalysed reaction is (R)-glycerate + NAD(+) = 3-hydroxypyruvate + NADH + H(+). The enzyme catalyses (R)-glycerate + NADP(+) = 3-hydroxypyruvate + NADPH + H(+). Catalyzes the NADPH-dependent reduction of glyoxylate and hydroxypyruvate into glycolate and glycerate, respectively. The chain is Glyoxylate/hydroxypyruvate reductase A from Salmonella dublin (strain CT_02021853).